The following is a 194-amino-acid chain: Probable GTP-binding protein EngB (194 aa).

An EngB-type G domain is found at 22 to 194 (GKPEIALVGR…EVWHWIEQHI (173 aa)). GTP contacts are provided by residues 30–37 (GRSNVGKS), 57–61 (GKTQT), 75–78 (DVPG), 142–145 (TKSD), and 175–177 (FSS). Ser-37 and Thr-59 together coordinate Mg(2+).

The protein belongs to the TRAFAC class TrmE-Era-EngA-EngB-Septin-like GTPase superfamily. EngB GTPase family. It depends on Mg(2+) as a cofactor.

Functionally, necessary for normal cell division and for the maintenance of normal septation. This chain is Probable GTP-binding protein EngB, found in Leuconostoc mesenteroides subsp. mesenteroides (strain ATCC 8293 / DSM 20343 / BCRC 11652 / CCM 1803 / JCM 6124 / NCDO 523 / NBRC 100496 / NCIMB 8023 / NCTC 12954 / NRRL B-1118 / 37Y).